The following is a 302-amino-acid chain: 5'-3' exonuclease (302 aa).

The 5'-3' exonuclease domain maps to 173–269 (IPKLIPDLLG…NITTKKIKML (97 aa)).

In terms of biological role, 5'-3' exonuclease acting preferentially on double-stranded DNA. In Buchnera aphidicola subsp. Baizongia pistaciae (strain Bp), this protein is 5'-3' exonuclease (pol).